The sequence spans 2240 residues: Cadherin-89D (2240 aa).

5 consecutive Cadherin domains span residues 70 to 179, 180 to 295, 296 to 411, 412 to 528, and 529 to 643; these read SEGV…APEF, LNVP…PPKF, TEGV…VPEF, EADY…TPKF, and EHGN…APYE. Residues N114, N119, N191, N278, N334, N417, N585, N720, N752, N822, N833, N983, N989, N1006, N1255, N1318, N1486, N1529, and N1556 are each glycosylated (N-linked (GlcNAc...) asparagine). Residues 814–844 form a disordered region; it reads MPSEPTSRNITMGSRFRSRNRSRSSKSKRRL. Cadherin domains follow at residues 824–927, 928–1087, 1171–1284, 1285–1389, and 1411–1520; these read TMGS…APKF, NALT…APMF, TTKC…APTF, KKSW…RPEF, and MLPV…PPKS. Positions 829-844 are enriched in basic residues; sequence FRSRNRSRSSKSKRRL. 2 Cadherin domains span residues 1534 to 1660 and 1661 to 1774; these read QHAY…APKF and RGNG…MPVE. The chain crosses the membrane as a helical span at residues 1884 to 1904; it reads FVTVVLLALISLGALIAACCY. Residues 1905–2240 are Cytoplasmic-facing; it reads VCMRQKRRLW…LEFSKSNSLF (336 aa). 2 disordered regions span residues 1930 to 1972 and 2121 to 2140; these read IAGI…PESV and AHLE…EDSL. Basic residues predominate over residues 1939–1952; the sequence is QKQRRQRQQRHTQR. Residues 1953–1964 show a composition bias toward polar residues; it reads CSKGSTGSQRPT.

It localises to the cell membrane. Functionally, cadherins are calcium-dependent cell adhesion proteins. They preferentially interact with themselves in a homophilic manner in connecting cells. This is Cadherin-89D (Cad89D) from Drosophila melanogaster (Fruit fly).